We begin with the raw amino-acid sequence, 491 residues long: GTPase Der (491 aa).

EngA-type G domains are found at residues 54 to 217 (PVLA…PEYS) and 229 to 402 (RRIA…ESWD). GTP is bound by residues 60–67 (GRPNVGKS), 107–111 (DTGGW), 169–172 (NKVD), 235–242 (GRPNVGKS), 282–286 (DTAGI), and 347–350 (NKWD). The 83-residue stretch at 403–485 (RRIPTGRLNA…PIEVNMRVRE (83 aa)) folds into the KH-like domain.

The protein belongs to the TRAFAC class TrmE-Era-EngA-EngB-Septin-like GTPase superfamily. EngA (Der) GTPase family. Associates with the 50S ribosomal subunit.

Its function is as follows. GTPase that plays an essential role in the late steps of ribosome biogenesis. The chain is GTPase Der from Paenarthrobacter aurescens (strain TC1).